The following is a 101-amino-acid chain: UPF0235 protein Cphamn1_2066 (101 aa).

It belongs to the UPF0235 family.

This Chlorobium phaeobacteroides (strain BS1) protein is UPF0235 protein Cphamn1_2066.